Consider the following 329-residue polypeptide: Dapdiamide synthesis protein DdaC (329 aa).

The cofactor is Fe(2+).

It functions in the pathway antibiotic biosynthesis. In terms of biological role, involved in dapdiamide antibiotics biosynthesis. Catalyzes the alpha-ketoglutarate-dependent epoxidation of the covalently bound N-beta-fumaramoyl-DAP-S-DdaD to generate N-beta-epoxysuccinamoyl-DAP in thioester linkage to DdaD. The polypeptide is Dapdiamide synthesis protein DdaC (Enterobacter agglomerans (Erwinia herbicola)).